A 560-amino-acid polypeptide reads, in one-letter code: DNA ligase B (560 aa).

The active-site N6-AMP-lysine intermediate is Lys124.

The protein belongs to the NAD-dependent DNA ligase family. LigB subfamily.

It catalyses the reaction NAD(+) + (deoxyribonucleotide)n-3'-hydroxyl + 5'-phospho-(deoxyribonucleotide)m = (deoxyribonucleotide)n+m + AMP + beta-nicotinamide D-nucleotide.. Its function is as follows. Catalyzes the formation of phosphodiester linkages between 5'-phosphoryl and 3'-hydroxyl groups in double-stranded DNA using NAD as a coenzyme and as the energy source for the reaction. The protein is DNA ligase B of Escherichia coli O9:H4 (strain HS).